A 230-amino-acid chain; its full sequence is uncharacterized protein (230 aa).

The N-terminal stretch at 1–21 is a signal peptide; the sequence is MARYDARLRGIGKAHACSAFA. Residues 47-190 are disordered; the sequence is SASVQENFIA…TVQTSSSGDP (144 aa). The span at 141–150 shows a compositional bias: polar residues; the sequence is PQSQTSANSQ. Positions 151–165 are enriched in basic and acidic residues; it reads KKPEIRCRERSKNAR. Polar residues predominate over residues 173–188; it reads AVATNEAETVQTSSSG.

To R.meliloti RA0936 and y4aO.

This is an uncharacterized protein from Sinorhizobium fredii (strain NBRC 101917 / NGR234).